The sequence spans 490 residues: Beta-1,3-glucan-binding protein 1 (490 aa).

Residues 1–19 (MYKQTVVIFLLCFFICVSC) form the signal peptide. Residues 20-119 (YEVPPAKLEA…GEWTVTGYVD (100 aa)) form the CBM39 domain. In terms of domain architecture, GH16 spans 152 to 490 (PPTSQNTYPC…QVDYVRVYAL (339 aa)). The N-linked (GlcNAc...) asparagine glycan is linked to N372.

The protein belongs to the insect beta-1,3-glucan binding protein family. In terms of assembly, monomer. Hemolymph.

It is found in the secreted. In terms of biological role, plays a role in the recognition of invading microorganisms activating the phenoloxidase cascade. Binds specifically to beta-1,3-glucan. Binds the Aspergillus niger cell wall component alpha-1,3-glucan, a fungal pathogen-associated molecular pattern (PAMP) that activates the host immune response. This Galleria mellonella (Greater wax moth) protein is Beta-1,3-glucan-binding protein 1.